The primary structure comprises 229 residues: Large ribosomal subunit protein uL1 (229 aa).

Belongs to the universal ribosomal protein uL1 family. As to quaternary structure, part of the 50S ribosomal subunit.

In terms of biological role, binds directly to 23S rRNA. The L1 stalk is quite mobile in the ribosome, and is involved in E site tRNA release. Its function is as follows. Protein L1 is also a translational repressor protein, it controls the translation of the L11 operon by binding to its mRNA. The polypeptide is Large ribosomal subunit protein uL1 (Clostridium botulinum (strain ATCC 19397 / Type A)).